The following is a 156-amino-acid chain: Small ribosomal subunit protein uS7 (156 aa).

The protein belongs to the universal ribosomal protein uS7 family. As to quaternary structure, part of the 30S ribosomal subunit. Contacts proteins S9 and S11.

In terms of biological role, one of the primary rRNA binding proteins, it binds directly to 16S rRNA where it nucleates assembly of the head domain of the 30S subunit. Is located at the subunit interface close to the decoding center, probably blocks exit of the E-site tRNA. This Polynucleobacter necessarius subsp. necessarius (strain STIR1) protein is Small ribosomal subunit protein uS7.